A 661-amino-acid polypeptide reads, in one-letter code: L-type lectin-domain containing receptor kinase V.5 (661 aa).

The N-terminal stretch at 1-25 (MSRELIILCQPILVLFLTLFYNSHG) is a signal peptide. At 26 to 282 (YFVSQGSVGI…KTSNRTKTVL (257 aa)) the chain is on the extracellular side. The legume-lectin like stretch occupies residues 30–250 (QGSVGIGFNG…GAIHYLMGWL (221 aa)). N-linked (GlcNAc...) asparagine glycosylation is found at asparagine 45, asparagine 64, asparagine 116, asparagine 198, and asparagine 276. A helical transmembrane segment spans residues 283–303 (AVCLTVSVFAAFVASWIGFVF). The Cytoplasmic segment spans residues 304-661 (YLRHKKVKEV…TDSSFVSHGR (358 aa)). Positions 338 to 596 (FKEKQLLGKG…LGVLCSHQAA (259 aa)) constitute a Protein kinase domain. ATP-binding positions include 344-352 (LGKGGFGQV) and lysine 367. Residue aspartate 464 is the Proton acceptor of the active site.

The protein in the C-terminal section; belongs to the protein kinase superfamily. Ser/Thr protein kinase family. It in the N-terminal section; belongs to the leguminous lectin family. Post-translationally, autophosphorylated on a Ser residue. Expressed at low levels in stems, leaves, flowers and siliques.

Its subcellular location is the cell membrane. The catalysed reaction is L-seryl-[protein] + ATP = O-phospho-L-seryl-[protein] + ADP + H(+). The enzyme catalyses L-threonyl-[protein] + ATP = O-phospho-L-threonyl-[protein] + ADP + H(+). Confers resistance to the pathogenic oomycetes Phytophthora infestans and Phytophthora capsici, but confers susceptibility to the pathogenic bacteria Pseudomonas syringae. This Arabidopsis thaliana (Mouse-ear cress) protein is L-type lectin-domain containing receptor kinase V.5.